The chain runs to 249 residues: E3 ubiquitin-protein ligase RMA1 (249 aa).

Residues 48-97 form an RING-type zinc finger; it reads CNICLDSVQEPVVTLCGHLFCWPCIHKWLDVQSFSTSDEYQRHRQCPVCK. Residues 231-248 form a helical; Anchor for type IV membrane protein membrane-spanning segment; it reads LGRIFFFFMCCVVLCLLL.

In terms of tissue distribution, ubiquitous. Highly expressed in roots.

It localises to the endoplasmic reticulum membrane. It carries out the reaction S-ubiquitinyl-[E2 ubiquitin-conjugating enzyme]-L-cysteine + [acceptor protein]-L-lysine = [E2 ubiquitin-conjugating enzyme]-L-cysteine + N(6)-ubiquitinyl-[acceptor protein]-L-lysine.. It functions in the pathway protein modification; protein ubiquitination. E3 ubiquitin-protein ligase that promotes the ubiquitination and proteasomal degradation of aquaporin PIP2-1. Forms a ubiquitin ligase complex in cooperation with the E2 enzymes UCB8/UCB10. The sequence is that of E3 ubiquitin-protein ligase RMA1 (RMA1) from Arabidopsis thaliana (Mouse-ear cress).